A 120-amino-acid chain; its full sequence is Large ribosomal subunit protein uL24 (120 aa).

It belongs to the universal ribosomal protein uL24 family. In terms of assembly, part of the 50S ribosomal subunit.

Its function is as follows. One of two assembly initiator proteins, it binds directly to the 5'-end of the 23S rRNA, where it nucleates assembly of the 50S subunit. In terms of biological role, one of the proteins that surrounds the polypeptide exit tunnel on the outside of the subunit. This chain is Large ribosomal subunit protein uL24, found in Pseudarthrobacter chlorophenolicus (strain ATCC 700700 / DSM 12829 / CIP 107037 / JCM 12360 / KCTC 9906 / NCIMB 13794 / A6) (Arthrobacter chlorophenolicus).